A 359-amino-acid chain; its full sequence is UPF0283 membrane protein R01807 (359 aa).

2 helical membrane-spanning segments follow: residues 76–96 and 109–129; these read FGKI…GLWI and WLGY…LIVV.

This sequence belongs to the UPF0283 family.

Its subcellular location is the cell inner membrane. In Rhizobium meliloti (strain 1021) (Ensifer meliloti), this protein is UPF0283 membrane protein R01807.